The sequence spans 507 residues: WD repeat-containing protein fzy-1 (507 aa).

Disordered stretches follow at residues 1–39 (MNNK…NTNL) and 74–95 (NKEN…SVEG). Polar residues-rich tracts occupy residues 15 to 24 (VRSSAQQNGL) and 74 to 86 (NKEN…SEPN). WD repeat units lie at residues 219–258 (TNEG…TTEY), 313–352 (GHCR…GSTV), 364–406 (EHTG…QKVR), and 411–450 (CETG…KLSH).

It belongs to the WD repeat CDC20/Fizzy family.

It is found in the chromosome. The protein resides in the cytoplasm. In terms of biological role, plays a role in metaphase-anaphase transition during meiosis I. Required for embryonic anterior-posterior axis formation. The chain is WD repeat-containing protein fzy-1 from Caenorhabditis elegans.